A 96-amino-acid polypeptide reads, in one-letter code: Aspartyl/glutamyl-tRNA(Asn/Gln) amidotransferase subunit C (96 aa).

Belongs to the GatC family. In terms of assembly, heterotrimer of A, B and C subunits.

It carries out the reaction L-glutamyl-tRNA(Gln) + L-glutamine + ATP + H2O = L-glutaminyl-tRNA(Gln) + L-glutamate + ADP + phosphate + H(+). The catalysed reaction is L-aspartyl-tRNA(Asn) + L-glutamine + ATP + H2O = L-asparaginyl-tRNA(Asn) + L-glutamate + ADP + phosphate + 2 H(+). Functionally, allows the formation of correctly charged Asn-tRNA(Asn) or Gln-tRNA(Gln) through the transamidation of misacylated Asp-tRNA(Asn) or Glu-tRNA(Gln) in organisms which lack either or both of asparaginyl-tRNA or glutaminyl-tRNA synthetases. The reaction takes place in the presence of glutamine and ATP through an activated phospho-Asp-tRNA(Asn) or phospho-Glu-tRNA(Gln). The polypeptide is Aspartyl/glutamyl-tRNA(Asn/Gln) amidotransferase subunit C (Sulfurovum sp. (strain NBC37-1)).